The sequence spans 393 residues: SH3 domain-binding protein 5-like (393 aa).

The tract at residues 1 to 58 is disordered; it reads MAELRQVPGGRETPQGELRPEVVEDEVPRSPVAEEPGGGGSSSSEAKLSPREEEELDP. Thr-13 is subject to Phosphothreonine. The span at 18-28 shows a compositional bias: basic and acidic residues; the sequence is LRPEVVEDEVP. Phosphoserine is present on residues Ser-30 and Ser-49. 2 coiled-coil regions span residues 59–140 and 169–272; these read RIQE…YERA and WQEM…EQIH. Positions 273-332 are disordered; the sequence is ARRRGGLPPHPLGPRRSSPVGAEAGPEDMEDGDSGIEGAEGAGLEEGSSLGPGPAPDTDT. The span at 297 to 306 shows a compositional bias: acidic residues; the sequence is GPEDMEDGDS. Residues 317-332 show a composition bias toward low complexity; sequence EEGSSLGPGPAPDTDT. Phosphoserine occurs at positions 343, 350, 358, 362, and 378. A disordered region spans residues 362–393; the sequence is SLDGQELGTRSGGRRGSDGGARGGRHQRSVSL. The segment covering 384–393 has biased composition (basic residues); sequence GGRHQRSVSL.

It belongs to the SH3BP5 family.

In terms of biological role, functions as a guanine nucleotide exchange factor (GEF) for RAB11A. The protein is SH3 domain-binding protein 5-like (SH3BP5L) of Homo sapiens (Human).